The primary structure comprises 366 residues: Chorismate synthase (366 aa).

NADP(+) contacts are provided by R48 and R54. FMN is bound by residues 125-127 (RSS), 238-239 (NA), G278, 293-297 (KPTSS), and R319.

It belongs to the chorismate synthase family. In terms of assembly, homotetramer. FMNH2 serves as cofactor.

The catalysed reaction is 5-O-(1-carboxyvinyl)-3-phosphoshikimate = chorismate + phosphate. It functions in the pathway metabolic intermediate biosynthesis; chorismate biosynthesis; chorismate from D-erythrose 4-phosphate and phosphoenolpyruvate: step 7/7. In terms of biological role, catalyzes the anti-1,4-elimination of the C-3 phosphate and the C-6 proR hydrogen from 5-enolpyruvylshikimate-3-phosphate (EPSP) to yield chorismate, which is the branch point compound that serves as the starting substrate for the three terminal pathways of aromatic amino acid biosynthesis. This reaction introduces a second double bond into the aromatic ring system. The protein is Chorismate synthase of Paraburkholderia xenovorans (strain LB400).